A 338-amino-acid chain; its full sequence is Lipoyl synthase (338 aa).

The disordered stretch occupies residues 1–24; sequence MTTVQEAVPNLIPTQDATPRPAPK. [4Fe-4S] cluster is bound by residues cysteine 84, cysteine 89, cysteine 95, cysteine 110, cysteine 114, cysteine 117, and serine 324. The Radical SAM core domain maps to 96 to 313; sequence FSGGTATFMI…AEEGYKMGFK (218 aa).

Belongs to the radical SAM superfamily. Lipoyl synthase family. Requires [4Fe-4S] cluster as cofactor.

Its subcellular location is the cytoplasm. It carries out the reaction [[Fe-S] cluster scaffold protein carrying a second [4Fe-4S](2+) cluster] + N(6)-octanoyl-L-lysyl-[protein] + 2 oxidized [2Fe-2S]-[ferredoxin] + 2 S-adenosyl-L-methionine + 4 H(+) = [[Fe-S] cluster scaffold protein] + N(6)-[(R)-dihydrolipoyl]-L-lysyl-[protein] + 4 Fe(3+) + 2 hydrogen sulfide + 2 5'-deoxyadenosine + 2 L-methionine + 2 reduced [2Fe-2S]-[ferredoxin]. The protein operates within protein modification; protein lipoylation via endogenous pathway; protein N(6)-(lipoyl)lysine from octanoyl-[acyl-carrier-protein]: step 2/2. Functionally, catalyzes the radical-mediated insertion of two sulfur atoms into the C-6 and C-8 positions of the octanoyl moiety bound to the lipoyl domains of lipoate-dependent enzymes, thereby converting the octanoylated domains into lipoylated derivatives. This Pseudomonas putida (strain W619) protein is Lipoyl synthase.